The sequence spans 391 residues: Tryptophan synthase beta chain (391 aa).

The residue at position 84 (K84) is an N6-(pyridoxal phosphate)lysine.

This sequence belongs to the TrpB family. As to quaternary structure, tetramer of two alpha and two beta chains. Pyridoxal 5'-phosphate is required as a cofactor.

The enzyme catalyses (1S,2R)-1-C-(indol-3-yl)glycerol 3-phosphate + L-serine = D-glyceraldehyde 3-phosphate + L-tryptophan + H2O. Its pathway is amino-acid biosynthesis; L-tryptophan biosynthesis; L-tryptophan from chorismate: step 5/5. In terms of biological role, the beta subunit is responsible for the synthesis of L-tryptophan from indole and L-serine. This chain is Tryptophan synthase beta chain, found in Thermoanaerobacter sp. (strain X514).